Here is a 1099-residue protein sequence, read N- to C-terminus: Zinc finger protein basonuclin-2 (1099 aa).

Positions 45 to 66 (EEAEVDVRERETQRDREPKRAR) are disordered. The segment covering 49 to 66 (VDVRERETQRDREPKRAR) has biased composition (basic and acidic residues). A Glycyl lysine isopeptide (Lys-Gly) (interchain with G-Cter in SUMO2) cross-link involves residue Lys277. The disordered stretch occupies residues 357–385 (LSTQNEYNESSESEVSPTPYKNDQTPNRN). Positions 361–372 (NEYNESSESEVS) are enriched in low complexity. A compositionally biased stretch (polar residues) spans 375–385 (PYKNDQTPNRN). Residues Lys396, Lys416, and Lys421 each participate in a glycyl lysine isopeptide (Lys-Gly) (interchain with G-Cter in SUMO2) cross-link. Residues 397–423 (TEPACVSPIQNSAPVSDLTKTEHPKSS) are disordered. The segment at 441–464 (VFCNACGKTFYDKGTLKIHYNAVH) adopts a C2H2-type 1 zinc-finger fold. At Ser561 the chain carries Phosphoserine. 2 disordered regions span residues 622–641 (EPSA…MPVK) and 648–742 (DTAD…EGDE). Lys641 is covalently cross-linked (Glycyl lysine isopeptide (Lys-Gly) (interchain with G-Cter in SUMO2)). Residues 648–661 (DTADEFDDEDDDPN) are compositionally biased toward acidic residues. Basic and acidic residues-rich tracts occupy residues 670–680 (MSHDNHCHSQE) and 719–742 (ERDY…EGDE). The C2H2-type 2 zinc-finger motif lies at 833–856 (KICYVCKKSFKSSYSVKLHYRNVH). Glycyl lysine isopeptide (Lys-Gly) (interchain with G-Cter in SUMO2) cross-links involve residues Lys894 and Lys919. Disordered regions lie at residues 929–948 (LDVR…HLNG) and 968–1008 (LQSS…KAEA). The segment covering 982-995 (AGSDEGILLDDIDG) has biased composition (acidic residues). C2H2-type zinc fingers lie at residues 1035-1058 (IMCN…KTVH) and 1063-1090 (HKCK…PNLH). The interval 1079–1099 (SRNRHSQNPNLHKNIPFTSVD) is disordered.

Highly expressed in testis, uterus and small intestine, and weakly expressed in colon and prostate. Also expressed in skin, primary keratinocytes, immortalized keratinocytes, and HeLa and HEK293 cells. Not detected in blood, thymus, spleen or Hep-G2 cells.

Its subcellular location is the nucleus. In terms of biological role, probable transcription factor specific for skin keratinocytes. May play a role in the differentiation of spermatozoa and oocytes. May also play an important role in early urinary-tract development. This is Zinc finger protein basonuclin-2 from Homo sapiens (Human).